The sequence spans 257 residues: uncharacterized protein (257 aa).

The N-terminal stretch at 1-22 (MRYLKRLSWYISILILIVVIAG) is a signal peptide. Cysteine 23 carries the N-palmitoyl cysteine lipid modification. Cysteine 23 carries the S-diacylglycerol cysteine lipid modification.

It belongs to the staphylococcal tandem lipoprotein family.

Its subcellular location is the cell membrane. This is an uncharacterized protein from Staphylococcus aureus (strain N315).